The following is an 86-amino-acid chain: Anti-adapter protein IraP (86 aa).

Residues M1 to M47 adopt a coiled-coil conformation.

This sequence belongs to the IraP family. As to quaternary structure, interacts with RssB.

It localises to the cytoplasm. Functionally, inhibits RpoS proteolysis by regulating RssB activity, thereby increasing the stability of the sigma stress factor RpoS especially during phosphate and magnesium starvation, but also in stationary phase and during nitrogen starvation. Its effect on RpoS stability is due to its interaction with RssB, which probably blocks the interaction of RssB with RpoS, and the consequent delivery of the RssB-RpoS complex to the ClpXP protein degradation pathway. In Salmonella arizonae (strain ATCC BAA-731 / CDC346-86 / RSK2980), this protein is Anti-adapter protein IraP.